Reading from the N-terminus, the 438-residue chain is MATAASNPYLASSTILSSASLVHSESGGGGMQPGSGAVTSVSGGYRGDPTVKMVQSDFMQGAMAASNGGHMLSHAHQWVTSLPHAAAAAAAAAAAAAAEAGSPWSSSPVGMAGSPQQQDVKSSSNREDLHSGTALHHRPSHLGAHQSHQSAWGGTTASHISTITGGQQQSQQSLIYSQPGGFTVNGMLNPPGSLVHPGLMRGESPEMDHHHHHHHHQQQHPHHHHHHQHHAGVNSHDSHSDEDTPTSDDLEQFAKQFKQRRIKLGFTQADVGLALGTLYGNVFSQTTICRFEALQLSFKNMCKLKPLLNKWLEEADSTTGSPTSIDKIAAQGRKRKKRTSIEVSVKGALESHFLKCPKPSAQEITSLADNLQLEKEVVRVWFCNRRQKEKRMTPPGVPQTPEDVYTHAGNVSADTPPPSMDCKREFCGRLLKRCKFER.

Disordered regions lie at residues 22-43 (VHSESGGGGMQPGSGAVTSVSG), 102-172 (SPWS…QSQQ), and 186-248 (GMLN…PTSD). Composition is skewed to polar residues over residues 103–123 (PWSSSPVGMAGSPQQQDVKSS) and 146–159 (QSHQSAWGGTTASH). Residues 160–172 (ISTITGGQQQSQQ) are compositionally biased toward low complexity. Residues 210–230 (HHHHHHHQQQHPHHHHHHQHH) show a composition bias toward basic residues. One can recognise a POU-specific domain in the interval 242–316 (EDTPTSDDLE…LLNKWLEEAD (75 aa)). The homeobox DNA-binding region spans 334 to 393 (KRKKRTSIEVSVKGALESHFLKCPKPSAQEITSLADNLQLEKEVVRVWFCNRRQKEKRMT).

It belongs to the POU transcription factor family. Class-3 subfamily. As to expression, predominantly expressed in the embryonic and adult central nervous system. In adults, isoform 2 is expressed in the brain, ovary, basal cells of the skin and muscle satellite cells.

It localises to the nucleus. In terms of biological role, transcription factor that may play important roles in patterning the embryonic brain. In Danio rerio (Zebrafish), this protein is POU domain, class 3, transcription factor 3-A (pou3f3a).